We begin with the raw amino-acid sequence, 179 residues long: Cell division protein ZapC (179 aa).

The protein belongs to the ZapC family. As to quaternary structure, interacts directly with FtsZ.

The protein resides in the cytoplasm. Its function is as follows. Contributes to the efficiency of the cell division process by stabilizing the polymeric form of the cell division protein FtsZ. Acts by promoting interactions between FtsZ protofilaments and suppressing the GTPase activity of FtsZ. The chain is Cell division protein ZapC from Ferrimonas balearica (strain DSM 9799 / CCM 4581 / KCTC 23876 / PAT).